We begin with the raw amino-acid sequence, 471 residues long: Tryptophanase (471 aa).

An N6-acetyllysine mark is found at K5, K115, and K156. An N6-(pyridoxal phosphate)lysine modification is found at K270. K450 is subject to N6-acetyllysine.

This sequence belongs to the beta-eliminating lyase family. Homotetramer. Pyridoxal 5'-phosphate serves as cofactor.

The catalysed reaction is L-tryptophan + H2O = indole + pyruvate + NH4(+). It functions in the pathway amino-acid degradation; L-tryptophan degradation via pyruvate pathway; indole and pyruvate from L-tryptophan: step 1/1. The sequence is that of Tryptophanase (tnaA) from Escherichia coli O157:H7.